Consider the following 463-residue polypeptide: tRNA-2-methylthio-N(6)-dimethylallyladenosine synthase (463 aa).

Residues 19-135 (GSYWITTFGC…LESLLNQVDS (117 aa)) enclose the MTTase N-terminal domain. 6 residues coordinate [4Fe-4S] cluster: Cys-28, Cys-64, Cys-98, Cys-170, Cys-174, and Cys-177. Positions 156–393 (RDSSFCGWVN…NSLVENIAKE (238 aa)) constitute a Radical SAM core domain. Residues 396–463 (QRYKNTSQEI…RPFSLTAKLL (68 aa)) enclose the TRAM domain.

Belongs to the methylthiotransferase family. MiaB subfamily. As to quaternary structure, monomer. Requires [4Fe-4S] cluster as cofactor.

The protein localises to the cytoplasm. The enzyme catalyses N(6)-dimethylallyladenosine(37) in tRNA + (sulfur carrier)-SH + AH2 + 2 S-adenosyl-L-methionine = 2-methylsulfanyl-N(6)-dimethylallyladenosine(37) in tRNA + (sulfur carrier)-H + 5'-deoxyadenosine + L-methionine + A + S-adenosyl-L-homocysteine + 2 H(+). Catalyzes the methylthiolation of N6-(dimethylallyl)adenosine (i(6)A), leading to the formation of 2-methylthio-N6-(dimethylallyl)adenosine (ms(2)i(6)A) at position 37 in tRNAs that read codons beginning with uridine. The protein is tRNA-2-methylthio-N(6)-dimethylallyladenosine synthase of Prochlorococcus marinus (strain NATL1A).